Consider the following 159-residue polypeptide: Type-1 angiotensin II receptor-associated protein (159 aa).

At 1-23 the chain is on the extracellular side; the sequence is MELPAVNLKVILLGHWLLTTWGC. The chain crosses the membrane as a helical span at residues 24–44; the sequence is IVFSGSYAWANFTILALGVWA. The Cytoplasmic portion of the chain corresponds to 45–55; the sequence is VAQRDSIDAIS. A helical membrane pass occupies residues 56–76; sequence MFLGGLLATIFLDIVHISIFY. Residues 77–86 are Extracellular-facing; it reads PRVSLTDTGR. A helical transmembrane segment spans residues 87-107; it reads FGVGMAILSLLLKPLSCCFVY. The Cytoplasmic portion of the chain corresponds to 108 to 159; it reads HMYRERGGELLVHTGFLGSSQDRSAYQTIDSAEAPADPFAVPEGRSQDARGY. Residues 110–122 form an interaction with AGTR1 region; it reads YRERGGELLVHTG. 2 positions are modified to phosphoserine: S126 and S127. T135 bears the Phosphothreonine mark. A phosphoserine mark is found at S138 and S153. Residues 140 to 159 are disordered; the sequence is EAPADPFAVPEGRSQDARGY.

Interacts with RACK1, and with the C-terminal region of AGTR1. In terms of tissue distribution, ubiquitous but more abundant in kidney, heart, pancreas and thyroid.

It localises to the endoplasmic reticulum membrane. The protein localises to the golgi apparatus membrane. The protein resides in the cytoplasmic vesicle membrane. Appears to be a negative regulator of type-1 angiotensin II receptor-mediated signaling by regulating receptor internalization as well as mechanism of receptor desensitization such as phosphorylation. Also induces a decrease in cell proliferation and angiotensin II-stimulated transcriptional activity. The sequence is that of Type-1 angiotensin II receptor-associated protein (AGTRAP) from Homo sapiens (Human).